Reading from the N-terminus, the 39-residue chain is Large ribosomal subunit protein bL36 (39 aa).

This sequence belongs to the bacterial ribosomal protein bL36 family.

This chain is Large ribosomal subunit protein bL36, found in Levilactobacillus brevis (strain ATCC 367 / BCRC 12310 / CIP 105137 / JCM 1170 / LMG 11437 / NCIMB 947 / NCTC 947) (Lactobacillus brevis).